A 445-amino-acid polypeptide reads, in one-letter code: MNFRELDTSNGVKAAESSFRTKVVLAREIPWNGFASSNSITSEQYNLISKYDKHTDAEKKEKFAANSASYVNFFVNFINSTSNIEIIQYLLTLINEIIEIDPRAAGAFSKITKDDDKSYPYSVFFRLLNREDAYTNLHASIALAQIMCAGKPTQNDVESFFNWILKLLRKNNSSEVEVGLIALQSLLLKDDFRIFFNNIDGSALLLNILQALSTSSVNIQLLYETIYAIWLLTYNKDIAAAYSGTGLVANLVQLVKTVAKEKIVRLSLSTLRNLLNNGKSNEEMIDNGFVRMLNILNIKKWGDDDIPADIEVLINGLAKDIDNMSSFNKYKTEIISGELEWTPVHKSERFWKENISKFEENNYQVIKHLHQILKTSQSTPLQLSIACHDLCEFVRHHSRGKAIMTITNQTRYHGYDVKSNEEVKNQALFALQKMMLNNWEYLNAK.

Belongs to the V-ATPase H subunit family. As to quaternary structure, V-ATPase is a heteromultimeric enzyme composed of a peripheral catalytic V1 complex (components A to H) attached to an integral membrane V0 proton pore complex (components: a, c, c', c'' and d).

In terms of biological role, subunit of the peripheral V1 complex of vacuolar ATPase. Subunit H activates the ATPase activity of the enzyme and couples ATPase activity to proton flow. Vacuolar ATPase is responsible for acidifying a variety of intracellular compartments in eukaryotic cells, thus providing most of the energy required for transport processes in the vacuolar system. This chain is V-type proton ATPase subunit H (vatH), found in Dictyostelium discoideum (Social amoeba).